Consider the following 432-residue polypeptide: Trigger factor (432 aa).

The PPIase FKBP-type domain maps to 161-246 (GTRATINFVG…VVKVEARELP (86 aa)).

It belongs to the FKBP-type PPIase family. Tig subfamily.

It is found in the cytoplasm. The catalysed reaction is [protein]-peptidylproline (omega=180) = [protein]-peptidylproline (omega=0). In terms of biological role, involved in protein export. Acts as a chaperone by maintaining the newly synthesized protein in an open conformation. Functions as a peptidyl-prolyl cis-trans isomerase. This chain is Trigger factor, found in Aliivibrio salmonicida (strain LFI1238) (Vibrio salmonicida (strain LFI1238)).